The primary structure comprises 333 residues: Outer membrane protein assembly factor BamC (333 aa).

The first 18 residues, 1-18, serve as a signal peptide directing secretion; the sequence is MKKCLFPLSVLAVIVATG. A lipid anchor (N-palmitoyl cysteine) is attached at C19. Residue C19 is the site of S-diacylglycerol cysteine attachment.

Belongs to the BamC family. As to quaternary structure, part of the Bam complex.

It localises to the cell outer membrane. Its function is as follows. Part of the outer membrane protein assembly complex, which is involved in assembly and insertion of beta-barrel proteins into the outer membrane. The sequence is that of Outer membrane protein assembly factor BamC from Actinobacillus succinogenes (strain ATCC 55618 / DSM 22257 / CCUG 43843 / 130Z).